We begin with the raw amino-acid sequence, 267 residues long: Hydroxyethylthiazole kinase (267 aa).

Residue M49 participates in substrate binding. R124 and T170 together coordinate ATP. G197 is a binding site for substrate.

This sequence belongs to the Thz kinase family. Mg(2+) is required as a cofactor.

The enzyme catalyses 5-(2-hydroxyethyl)-4-methylthiazole + ATP = 4-methyl-5-(2-phosphooxyethyl)-thiazole + ADP + H(+). The protein operates within cofactor biosynthesis; thiamine diphosphate biosynthesis; 4-methyl-5-(2-phosphoethyl)-thiazole from 5-(2-hydroxyethyl)-4-methylthiazole: step 1/1. Its function is as follows. Catalyzes the phosphorylation of the hydroxyl group of 4-methyl-5-beta-hydroxyethylthiazole (THZ). The sequence is that of Hydroxyethylthiazole kinase from Tolumonas auensis (strain DSM 9187 / NBRC 110442 / TA 4).